The chain runs to 125 residues: MTIEEIISEIENMSVSQLAELVKALEEKFGVSASMPVAVAAPVAGPAAAAPAEEEKTSFDVILKEAGAKKLEVIKVVREITGLGLKEAKDLVESAPKPIKEGVTKEEAEELKKKLEEAGAVIELQ.

This sequence belongs to the bacterial ribosomal protein bL12 family. Homodimer. Part of the ribosomal stalk of the 50S ribosomal subunit. Forms a multimeric L10(L12)X complex, where L10 forms an elongated spine to which 2 to 4 L12 dimers bind in a sequential fashion. Binds GTP-bound translation factors.

Its function is as follows. Forms part of the ribosomal stalk which helps the ribosome interact with GTP-bound translation factors. Is thus essential for accurate translation. The protein is Large ribosomal subunit protein bL12 of Coprothermobacter proteolyticus (strain ATCC 35245 / DSM 5265 / OCM 4 / BT).